A 124-amino-acid polypeptide reads, in one-letter code: Small ribosomal subunit protein uS12 (124 aa).

3-methylthioaspartic acid is present on D89.

It belongs to the universal ribosomal protein uS12 family. As to quaternary structure, part of the 30S ribosomal subunit. Contacts proteins S8 and S17. May interact with IF1 in the 30S initiation complex.

With S4 and S5 plays an important role in translational accuracy. In terms of biological role, interacts with and stabilizes bases of the 16S rRNA that are involved in tRNA selection in the A site and with the mRNA backbone. Located at the interface of the 30S and 50S subunits, it traverses the body of the 30S subunit contacting proteins on the other side and probably holding the rRNA structure together. The combined cluster of proteins S8, S12 and S17 appears to hold together the shoulder and platform of the 30S subunit. This chain is Small ribosomal subunit protein uS12, found in Psychrobacter sp. (strain PRwf-1).